The sequence spans 257 residues: Imidazole glycerol phosphate synthase subunit HisF (257 aa).

Active-site residues include Asp11 and Asp130.

It belongs to the HisA/HisF family. In terms of assembly, heterodimer of HisH and HisF.

It localises to the cytoplasm. It carries out the reaction 5-[(5-phospho-1-deoxy-D-ribulos-1-ylimino)methylamino]-1-(5-phospho-beta-D-ribosyl)imidazole-4-carboxamide + L-glutamine = D-erythro-1-(imidazol-4-yl)glycerol 3-phosphate + 5-amino-1-(5-phospho-beta-D-ribosyl)imidazole-4-carboxamide + L-glutamate + H(+). It functions in the pathway amino-acid biosynthesis; L-histidine biosynthesis; L-histidine from 5-phospho-alpha-D-ribose 1-diphosphate: step 5/9. IGPS catalyzes the conversion of PRFAR and glutamine to IGP, AICAR and glutamate. The HisF subunit catalyzes the cyclization activity that produces IGP and AICAR from PRFAR using the ammonia provided by the HisH subunit. This Aeromonas hydrophila subsp. hydrophila (strain ATCC 7966 / DSM 30187 / BCRC 13018 / CCUG 14551 / JCM 1027 / KCTC 2358 / NCIMB 9240 / NCTC 8049) protein is Imidazole glycerol phosphate synthase subunit HisF.